A 164-amino-acid polypeptide reads, in one-letter code: Hydroxylaminobenzene mutase HabB (164 aa).

A run of 4 helical transmembrane segments spans residues 16–36 (LLQL…LLPM), 50–70 (GVLN…LSLG), 78–98 (FGFA…AGFW), and 121–141 (LIAF…ALAL).

The protein resides in the cell membrane. The enzyme catalyses N-phenylhydroxylamine = 2-aminophenol. Its activity is regulated as follows. Addition of ZnSO(4) decreases the activity to 70%. Its function is as follows. Catalyzes the rearrangement of hydroxylaminobenzene to 2-aminophenol. This Ectopseudomonas oleovorans (Pseudomonas oleovorans) protein is Hydroxylaminobenzene mutase HabB (habB).